A 119-amino-acid polypeptide reads, in one-letter code: Large ribosomal subunit protein bL20 (119 aa).

The protein belongs to the bacterial ribosomal protein bL20 family.

Its function is as follows. Binds directly to 23S ribosomal RNA and is necessary for the in vitro assembly process of the 50S ribosomal subunit. It is not involved in the protein synthesizing functions of that subunit. The chain is Large ribosomal subunit protein bL20 from Rhodopseudomonas palustris (strain HaA2).